A 514-amino-acid chain; its full sequence is Type-2 serine--tRNA ligase (514 aa).

L-serine is bound at residue A313. C315 lines the Zn(2+) pocket. R344 serves as a coordination point for L-serine. ATP is bound by residues 344-346 (RWE) and 355-356 (RV). 361-363 (RGE) is an L-serine binding site. Residues E363 and C470 each contribute to the Zn(2+) site. R477 contacts ATP.

Belongs to the class-II aminoacyl-tRNA synthetase family. Type-2 seryl-tRNA synthetase subfamily. Homodimer. Requires Zn(2+) as cofactor.

The protein resides in the cytoplasm. It carries out the reaction tRNA(Ser) + L-serine + ATP = L-seryl-tRNA(Ser) + AMP + diphosphate + H(+). The enzyme catalyses tRNA(Sec) + L-serine + ATP = L-seryl-tRNA(Sec) + AMP + diphosphate + H(+). It functions in the pathway aminoacyl-tRNA biosynthesis; selenocysteinyl-tRNA(Sec) biosynthesis; L-seryl-tRNA(Sec) from L-serine and tRNA(Sec): step 1/1. In terms of biological role, catalyzes the attachment of serine to tRNA(Ser). Is also able to aminoacylate tRNA(Sec) with serine, to form the misacylated tRNA L-seryl-tRNA(Sec), which will be further converted into selenocysteinyl-tRNA(Sec). The protein is Type-2 serine--tRNA ligase of Methanococcus maripaludis (strain C6 / ATCC BAA-1332).